The following is an 81-amino-acid chain: Insulin (81 aa).

3 disulfide bridges follow: cysteine 7/cysteine 67, cysteine 19/cysteine 80, and cysteine 66/cysteine 71. The propeptide at 33–58 is c peptide; it reads DVEQPLVNGPLHGEVGELPFQHEEYQ.

Belongs to the insulin family. Heterodimer of a B chain and an A chain linked by two disulfide bonds.

The protein localises to the secreted. Functionally, insulin decreases blood glucose concentration. It increases cell permeability to monosaccharides, amino acids and fatty acids. It accelerates glycolysis, the pentose phosphate cycle, and glycogen synthesis in liver. This chain is Insulin (INS), found in Anas platyrhynchos (Mallard).